We begin with the raw amino-acid sequence, 189 residues long: Ribonuclease HII (189 aa).

The 189-residue stretch at 1 to 189 folds into the RNase H type-2 domain; sequence MIAGVDEAGR…IAALLKNNKK (189 aa). A divalent metal cation contacts are provided by D6, E7, and D98.

It belongs to the RNase HII family. It depends on Mn(2+) as a cofactor. Mg(2+) is required as a cofactor.

It is found in the cytoplasm. The catalysed reaction is Endonucleolytic cleavage to 5'-phosphomonoester.. Its function is as follows. Endonuclease that specifically degrades the RNA of RNA-DNA hybrids. This chain is Ribonuclease HII, found in Dichelobacter nodosus (strain VCS1703A).